A 428-amino-acid polypeptide reads, in one-letter code: C4-dicarboxylate transport protein (428 aa).

A run of 8 helical transmembrane segments spans residues 8-28, 44-64, 78-98, 148-168, 184-204, 222-242, 307-327, and 355-375; these read VLYV…HYYP, LIKM…IAGM, LLYF…ATHI, GEIL…AHLG, VLFG…FGAM, LIGT…GAIA, IYMT…LTWM, and AATL…ILGI.

Belongs to the dicarboxylate/amino acid:cation symporter (DAACS) (TC 2.A.23) family.

The protein resides in the cell inner membrane. Its function is as follows. Responsible for the transport of dicarboxylates such as succinate, fumarate, and malate from the periplasm across the membrane. This is C4-dicarboxylate transport protein from Burkholderia pseudomallei (strain 1106a).